Here is a 189-residue protein sequence, read N- to C-terminus: Notch ligand osm-11 (189 aa).

Positions methionine 1–alanine 18 are cleaved as a signal peptide.

May interact with lin-12/Notch receptor. Expressed in coelomocytes (at protein level).

Its subcellular location is the apical cell membrane. Functionally, probable secreted lin-12/Notch ligand or co-ligand involved in the mediation of Notch signaling. Involved in the lin-12/Notch pathway signaling of cell fate in vulval precursor cells (VPCs), acting redundantly with dsl-1 and lag-2. Required for normal octanol avoidance response, acting via both lin-12/Notch and glp-1/Notch signaling pathways in neurons, in concert with lag-2. Involved in regulation of sleep-like quiescence during the larval to adult transition, acting via Notch receptor activation and in parallel with EGF signaling. The sequence is that of Notch ligand osm-11 from Caenorhabditis elegans.